Consider the following 300-residue polypeptide: 4-hydroxy-tetrahydrodipicolinate synthase (300 aa).

Residue Thr-55 participates in pyruvate binding. Tyr-143 serves as the catalytic Proton donor/acceptor. Catalysis depends on Lys-171, which acts as the Schiff-base intermediate with substrate. Ile-211 contributes to the pyruvate binding site.

The protein belongs to the DapA family. In terms of assembly, homotetramer; dimer of dimers.

The protein resides in the cytoplasm. The enzyme catalyses L-aspartate 4-semialdehyde + pyruvate = (2S,4S)-4-hydroxy-2,3,4,5-tetrahydrodipicolinate + H2O + H(+). It functions in the pathway amino-acid biosynthesis; L-lysine biosynthesis via DAP pathway; (S)-tetrahydrodipicolinate from L-aspartate: step 3/4. Functionally, catalyzes the condensation of (S)-aspartate-beta-semialdehyde [(S)-ASA] and pyruvate to 4-hydroxy-tetrahydrodipicolinate (HTPA). This Mycolicibacterium paratuberculosis (strain ATCC BAA-968 / K-10) (Mycobacterium paratuberculosis) protein is 4-hydroxy-tetrahydrodipicolinate synthase.